The primary structure comprises 351 residues: Holliday junction branch migration complex subunit RuvB (351 aa).

Over residues 1 to 12 (MGRFEDDAEVED) the composition is skewed to acidic residues. The interval 1–23 (MGRFEDDAEVEDREVSPALTVGE) is disordered. A large ATPase domain (RuvB-L) region spans residues 1–191 (MGRFEDDAEV…FGFTAHMDFY (191 aa)). Residues leucine 30, arginine 31, glycine 72, lysine 75, threonine 76, serine 77, 138–140 (EDF), arginine 181, tyrosine 191, and arginine 228 each bind ATP. Threonine 76 contacts Mg(2+). The segment at 192 to 262 (EPVELERVLA…IAKSALEVYD (71 aa)) is small ATPAse domain (RuvB-S). The interval 265–351 (ELGLDRLDRA…TGIGQAGLFD (87 aa)) is head domain (RuvB-H). Arginine 320 and arginine 325 together coordinate DNA.

It belongs to the RuvB family. Homohexamer. Forms an RuvA(8)-RuvB(12)-Holliday junction (HJ) complex. HJ DNA is sandwiched between 2 RuvA tetramers; dsDNA enters through RuvA and exits via RuvB. An RuvB hexamer assembles on each DNA strand where it exits the tetramer. Each RuvB hexamer is contacted by two RuvA subunits (via domain III) on 2 adjacent RuvB subunits; this complex drives branch migration. In the full resolvosome a probable DNA-RuvA(4)-RuvB(12)-RuvC(2) complex forms which resolves the HJ.

It is found in the cytoplasm. It catalyses the reaction ATP + H2O = ADP + phosphate + H(+). Functionally, the RuvA-RuvB-RuvC complex processes Holliday junction (HJ) DNA during genetic recombination and DNA repair, while the RuvA-RuvB complex plays an important role in the rescue of blocked DNA replication forks via replication fork reversal (RFR). RuvA specifically binds to HJ cruciform DNA, conferring on it an open structure. The RuvB hexamer acts as an ATP-dependent pump, pulling dsDNA into and through the RuvAB complex. RuvB forms 2 homohexamers on either side of HJ DNA bound by 1 or 2 RuvA tetramers; 4 subunits per hexamer contact DNA at a time. Coordinated motions by a converter formed by DNA-disengaged RuvB subunits stimulates ATP hydrolysis and nucleotide exchange. Immobilization of the converter enables RuvB to convert the ATP-contained energy into a lever motion, pulling 2 nucleotides of DNA out of the RuvA tetramer per ATP hydrolyzed, thus driving DNA branch migration. The RuvB motors rotate together with the DNA substrate, which together with the progressing nucleotide cycle form the mechanistic basis for DNA recombination by continuous HJ branch migration. Branch migration allows RuvC to scan DNA until it finds its consensus sequence, where it cleaves and resolves cruciform DNA. In Mycolicibacterium smegmatis (strain ATCC 700084 / mc(2)155) (Mycobacterium smegmatis), this protein is Holliday junction branch migration complex subunit RuvB.